Reading from the N-terminus, the 321-residue chain is 5,10-methylenetetrahydromethanopterin reductase (321 aa).

Belongs to the mer family. As to quaternary structure, homotetramer.

It localises to the cytoplasm. The catalysed reaction is 5-methyl-5,6,7,8-tetrahydromethanopterin + oxidized coenzyme F420-(gamma-L-Glu)(n) + H(+) = 5,10-methylenetetrahydromethanopterin + reduced coenzyme F420-(gamma-L-Glu)(n). The protein operates within one-carbon metabolism; methanogenesis from CO(2); methyl-coenzyme M from 5,10-methylene-5,6,7,8-tetrahydromethanopterin: step 1/2. Functionally, catalyzes the reversible reduction of methylene-H(4)MPT to methyl-H(4)MPT. This chain is 5,10-methylenetetrahydromethanopterin reductase, found in Methanothermobacter marburgensis (strain ATCC BAA-927 / DSM 2133 / JCM 14651 / NBRC 100331 / OCM 82 / Marburg) (Methanobacterium thermoautotrophicum).